Reading from the N-terminus, the 368-residue chain is Chaperone protein DnaJ (368 aa).

Residues 5–70 (DYYQVLGVPR…KKRKLYDTHG (66 aa)) enclose the J domain. A CR-type zinc finger spans residues 124–201 (GVERQIQIPT…CNGAGRVEDH (78 aa)). Positions 137, 140, 153, 156, 175, 178, 189, and 192 each coordinate Zn(2+). CXXCXGXG motif repeat units lie at residues 137 to 144 (CTHCHGSG), 153 to 160 (CGTCRGSG), 175 to 182 (CPHCGGRG), and 189 to 196 (CKVCNGAG).

This sequence belongs to the DnaJ family. As to quaternary structure, homodimer. Zn(2+) serves as cofactor.

The protein localises to the cytoplasm. Participates actively in the response to hyperosmotic and heat shock by preventing the aggregation of stress-denatured proteins and by disaggregating proteins, also in an autonomous, DnaK-independent fashion. Unfolded proteins bind initially to DnaJ; upon interaction with the DnaJ-bound protein, DnaK hydrolyzes its bound ATP, resulting in the formation of a stable complex. GrpE releases ADP from DnaK; ATP binding to DnaK triggers the release of the substrate protein, thus completing the reaction cycle. Several rounds of ATP-dependent interactions between DnaJ, DnaK and GrpE are required for fully efficient folding. Also involved, together with DnaK and GrpE, in the DNA replication of plasmids through activation of initiation proteins. This is Chaperone protein DnaJ from Xylella fastidiosa (strain 9a5c).